The sequence spans 659 residues: Mannosyl-oligosaccharide 1,2-alpha-mannosidase IA (659 aa).

The Cytoplasmic segment spans residues 1–48 (MPVGGLLPLFSSPAGGGLGGGLGGGLGGGGGGGGRKGSGPSAFRLTEK). Residues 49–69 (FVLLLVFSAFITLCFGAIFFL) form a helical; Signal-anchor for type II membrane protein membrane-spanning segment. Residues 70–659 (PDSSKLLSGV…NIKKVEDNEK (590 aa)) lie on the Lumenal side of the membrane. The disordered stretch occupies residues 88–121 (QPAADHKPGPGARAEDAADGRARPGEEGAPGDPA). Over residues 91 to 113 (ADHKPGPGARAEDAADGRARPGE) the composition is skewed to basic and acidic residues. A disulfide bridge links Cys-482 with Cys-514. Glu-528 (proton donor) is an active-site residue. A Ca(2+)-binding site is contributed by Thr-639.

The protein belongs to the glycosyl hydrolase 47 family. Ca(2+) serves as cofactor.

The protein resides in the endoplasmic reticulum membrane. The enzyme catalyses N(4)-(alpha-D-Man-(1-&gt;2)-alpha-D-Man-(1-&gt;2)-alpha-D-Man-(1-&gt;3)-[alpha-D-Man-(1-&gt;2)-alpha-D-Man-(1-&gt;3)-[alpha-D-Man-(1-&gt;2)-alpha-D-Man-(1-&gt;6)]-alpha-D-Man-(1-&gt;6)]-beta-D-Man-(1-&gt;4)-beta-D-GlcNAc-(1-&gt;4)-beta-D-GlcNAc)-L-asparaginyl-[protein] (N-glucan mannose isomer 9A1,2,3B1,2,3) + 4 H2O = N(4)-(alpha-D-Man-(1-&gt;3)-[alpha-D-Man-(1-&gt;3)-[alpha-D-Man-(1-&gt;6)]-alpha-D-Man-(1-&gt;6)]-beta-D-Man-(1-&gt;4)-beta-D-GlcNAc-(1-&gt;4)-beta-D-GlcNAc)-L-asparaginyl-[protein] (N-glucan mannose isomer 5A1,2) + 4 beta-D-mannose. It carries out the reaction N(4)-(alpha-D-Man-(1-&gt;2)-alpha-D-Man-(1-&gt;2)-alpha-D-Man-(1-&gt;3)-[alpha-D-Man-(1-&gt;3)-[alpha-D-Man-(1-&gt;2)-alpha-D-Man-(1-&gt;6)]-alpha-D-Man-(1-&gt;6)]-beta-D-Man-(1-&gt;4)-beta-D-GlcNAc-(1-&gt;4)-beta-D-GlcNAc)-L-asparaginyl-[protein] (N-glucan mannose isomer 8A1,2,3B1,3) + 3 H2O = N(4)-(alpha-D-Man-(1-&gt;3)-[alpha-D-Man-(1-&gt;3)-[alpha-D-Man-(1-&gt;6)]-alpha-D-Man-(1-&gt;6)]-beta-D-Man-(1-&gt;4)-beta-D-GlcNAc-(1-&gt;4)-beta-D-GlcNAc)-L-asparaginyl-[protein] (N-glucan mannose isomer 5A1,2) + 3 beta-D-mannose. It functions in the pathway protein modification; protein glycosylation. Its activity is regulated as follows. Inhibited by both 1-deoxymannojirimycin and kifunensine. Involved in the maturation of Asn-linked oligosaccharides. Progressively trim alpha-1,2-linked mannose residues from Man(9)GlcNAc(2) to produce Man(5)GlcNAc(2). This Sus scrofa (Pig) protein is Mannosyl-oligosaccharide 1,2-alpha-mannosidase IA (MAN1A1).